Consider the following 795-residue polypeptide: MWRISRVELENFRSYRGAHRLELGDVNLLWGRIGAGKTSVFYAIEYALFGQQLEVKERVAKLADLIHSGSHEARVALELVDGANVLKVERKLGKRGAEKLVVVHNGVELRGGEAERRLEELLGVDEDLYERLVYISHRTLEGFIYGTSQKRAISVDRLFGIDVIDGVVKTVSSAEKALLGKAEELRKRLAAYEKYRDVIKRYGGYSGLVSRLRALSSEIEALKEREAMLTRTVEELARARAAYLAKLKEHEQILLEYYRARSELEFLESSAGGEVDVGALEKVKAALREAAEEFEHMLDPGILEKLYKASDLEALSVAMAEVYDALTRVAKDLELELTDVKKAYEEYVARARRLEEEVAAAEARLRRLEKPFLRFQELLKKLRSLEEARARLSEARRRLSEAEREAAYYTSLKTVALYLAETNASVCPICGSPISREAVEKVVRDIDEKFGGVVKRVEELREEVKALEREVEEMEILQGDAAEYIAAKARLDELKVEREEVVKKVLQAEKSVRQLEKRIEKLREFFAKVDKRVISDAVSRYGRAVRIRELRKRVKELEERLRQAGIGGEELEVEVKWREAAAELEKAAARLAELYKEKSLLEEAAREVGEEAEGLKKRLDNVLYAYGRLEELKSRLELAKVSARARLVEVVRSRFNEVFQSLYKYGDVVKVDAAVEPSRGYYDFYAISPSGDRYGVSRLSDGQRLSIALSLALALREISQVKLGFLIFDEPIPYVDVNVRKAFAQLLTSLAGRYQLLVATQSREFAEEVREALPNAKLFTVVKDGASALIEGLQS.

Coiled coils occupy residues 205-253, 323-412, and 450-618; these read YSGL…HEQI, YDAL…YTSL, and FGGV…LKKR.

The protein resides in the cytoplasm. Its subcellular location is the cytoskeleton. Part of an actin-like archaeal cytoskeleton. The protein is Arcadin-4 of Pyrobaculum calidifontis (strain DSM 21063 / JCM 11548 / VA1).